The following is a 371-amino-acid chain: Neuropeptide S receptor (371 aa).

Residues Met1–Gln52 are Extracellular-facing. 2 N-linked (GlcNAc...) asparagine glycosylation sites follow: Asn4 and Asn13. The helical transmembrane segment at Leu53–Ser73 threads the bilayer. Topologically, residues Thr74–Arg82 are cytoplasmic. A helical membrane pass occupies residues Met83–Leu103. The Extracellular portion of the chain corresponds to Thr104–Val123. Cys121 and Cys197 are joined by a disulfide. Residues Val124–Ile144 traverse the membrane as a helical segment. Topologically, residues Asp145–Lys164 are cytoplasmic. A helical transmembrane segment spans residues Val165–Phe185. The Extracellular portion of the chain corresponds to Gly186 to Thr212. A helical transmembrane segment spans residues Ile213–Val233. At Ile234–Tyr275 the chain is on the cytoplasmic side. Residues Ser276–Leu296 traverse the membrane as a helical segment. Residues Asp297–Ser312 lie on the Extracellular side of the membrane. Residues Val313–Phe333 traverse the membrane as a helical segment. Residues Ser334–Ile371 lie on the Cytoplasmic side of the membrane.

Belongs to the G-protein coupled receptor 1 family. Vasopressin/oxytocin receptor subfamily.

It localises to the cell membrane. G-protein coupled receptor for neuropeptide S (NPS). Promotes mobilization of intracellular Ca(2+) stores. Inhibits cell growth in response to NPS binding. Involved in pathogenesis of asthma and other IgE-mediated diseases. This is Neuropeptide S receptor (NPSR1) from Macaca mulatta (Rhesus macaque).